The sequence spans 381 residues: Creatine kinase B-type (381 aa).

Residues 11 to 98 form the Phosphagen kinase N-terminal domain; that stretch reads KMKYSVDDEY…FDPVIEDRHG (88 aa). Residue valine 72 participates in creatine binding. In terms of domain architecture, Phosphagen kinase C-terminal spans 125–367; the sequence is YVLSSRVRTG…KLLIEMEKRL (243 aa). ATP is bound by residues 128 to 132, arginine 130, arginine 132, and histidine 191; that span reads SSRVR. Residue glutamate 232 participates in creatine binding. Residue arginine 236 participates in ATP binding. Phosphothreonine; by autocatalysis is present on threonine 282. Creatine is bound at residue serine 285. Position 285 is a phosphoserine; by autocatalysis (serine 285). At threonine 289 the chain carries Phosphothreonine; by autocatalysis. ATP contacts are provided by residues arginine 292, arginine 320, 320 to 325, and aspartate 335; that span reads RGTGGV.

It belongs to the ATP:guanido phosphotransferase family. In terms of assembly, dimer of identical or non-identical chains, which can be either B (brain type) or M (muscle type). With MM being the major form in skeletal muscle and myocardium, MB existing in myocardium, and BB existing in many tissues, especially brain. In terms of processing, ba-CK and Bb-CK are phosphorylated. Post-translationally, the N-terminus of BA-CK is blocked. In terms of tissue distribution, expressed in almost all tissues and found enriched in various region of the brain, retina, heart, gizzard, gut and sperm.

The protein localises to the cytoplasm. It localises to the cytosol. Its subcellular location is the mitochondrion. It is found in the cell membrane. It catalyses the reaction creatine + ATP = N-phosphocreatine + ADP + H(+). Its function is as follows. Reversibly catalyzes the transfer of phosphate between ATP and various phosphogens (e.g. creatine phosphate). Creatine kinase isoenzymes play a central role in energy transduction in tissues with large, fluctuating energy demands, such as skeletal muscle, heart, brain and spermatozoa. This Gallus gallus (Chicken) protein is Creatine kinase B-type.